Here is a 626-residue protein sequence, read N- to C-terminus: DNA primase (626 aa).

The segment at 39–63 adopts a CHC2-type zinc-finger fold; it reads CPFHGEKTPSFSVSPEKQIFHCFGC. A Toprim domain is found at 264–346; it reads EEITLMEGFM…DVFVLQLPAG (83 aa). Mg(2+) is bound by residues glutamate 270, aspartate 314, and aspartate 316.

It belongs to the DnaG primase family. As to quaternary structure, monomer. Interacts with DnaB. The cofactor is Zn(2+). Mg(2+) serves as cofactor.

The enzyme catalyses ssDNA + n NTP = ssDNA/pppN(pN)n-1 hybrid + (n-1) diphosphate.. Functionally, RNA polymerase that catalyzes the synthesis of short RNA molecules used as primers for DNA polymerase during DNA replication. The protein is DNA primase of Listeria innocua serovar 6a (strain ATCC BAA-680 / CLIP 11262).